A 364-amino-acid polypeptide reads, in one-letter code: Mannose-1-phosphate guanyltransferase (364 aa).

This sequence belongs to the transferase hexapeptide repeat family.

The protein resides in the cytoplasm. It catalyses the reaction alpha-D-mannose 1-phosphate + GTP + H(+) = GDP-alpha-D-mannose + diphosphate. It participates in nucleotide-sugar biosynthesis; GDP-alpha-D-mannose biosynthesis; GDP-alpha-D-mannose from alpha-D-mannose 1-phosphate (GTP route): step 1/1. Functionally, involved in cell wall synthesis where it is required for glycosylation. Involved in cell cycle progression through cell-size checkpoint. The polypeptide is Mannose-1-phosphate guanyltransferase (MPG1) (Pichia angusta (Yeast)).